Reading from the N-terminus, the 123-residue chain is Small ribosomal subunit protein uS12 (123 aa).

3-methylthioaspartic acid is present on Asp-89.

This sequence belongs to the universal ribosomal protein uS12 family. As to quaternary structure, part of the 30S ribosomal subunit. Contacts proteins S8 and S17. May interact with IF1 in the 30S initiation complex.

With S4 and S5 plays an important role in translational accuracy. Its function is as follows. Interacts with and stabilizes bases of the 16S rRNA that are involved in tRNA selection in the A site and with the mRNA backbone. Located at the interface of the 30S and 50S subunits, it traverses the body of the 30S subunit contacting proteins on the other side and probably holding the rRNA structure together. The combined cluster of proteins S8, S12 and S17 appears to hold together the shoulder and platform of the 30S subunit. The chain is Small ribosomal subunit protein uS12 from Methylobacterium sp. (strain 4-46).